Reading from the N-terminus, the 96-residue chain is NADH-ubiquinone oxidoreductase chain 4L (96 aa).

The next 3 membrane-spanning stretches (helical) occupy residues Ile-2 to Val-22, Leu-28 to Ile-48, and Met-62 to Ile-82.

This sequence belongs to the complex I subunit 4L family.

Its subcellular location is the mitochondrion membrane. The enzyme catalyses a ubiquinone + NADH + 5 H(+)(in) = a ubiquinol + NAD(+) + 4 H(+)(out). In terms of biological role, core subunit of the mitochondrial membrane respiratory chain NADH dehydrogenase (Complex I) that is believed to belong to the minimal assembly required for catalysis. Complex I functions in the transfer of electrons from NADH to the respiratory chain. The immediate electron acceptor for the enzyme is believed to be ubiquinone. The chain is NADH-ubiquinone oxidoreductase chain 4L (mt:ND4L) from Drosophila nasuta F (Fruit fly).